The sequence spans 333 residues: Probable ABC transporter permease protein y4mJ (333 aa).

A run of 10 helical transmembrane segments spans residues 30-50 (LAIAGAIVLLVLAVGTQVPQA), 62-82 (AGAPLIIMSLGVLLVVITGGI), 84-104 (LSVGSVFSLTGMVTAQAMASG), 110-130 (ALIGLGVGLVFGSINGFLVTV), 133-153 (LAPFVVTLITFAVAGSLAFIV), 175-195 (IPGVPNYILFCIVLLVVIEIF), 228-248 (FAYVASSLLASFSGLLTISYI), 253-273 (STAGSSLMLQAIAAVVIGGAS), 274-294 (LLGGTGTAVGAVLGALMITVI), and 300-320 (LIGINSFWQGSVTGLAILIAV).

This sequence belongs to the binding-protein-dependent transport system permease family. AraH/RbsC subfamily.

The protein resides in the cell inner membrane. Probably part of the binding-protein-dependent transport system y4mIJK. This system probably transports a sugar. Probably responsible for the translocation of the substrate across the membrane. This is Probable ABC transporter permease protein y4mJ from Sinorhizobium fredii (strain NBRC 101917 / NGR234).